The primary structure comprises 236 residues: Ribonuclease PH (236 aa).

Residues Arg-86 and 124–126 (GTR) contribute to the phosphate site.

It belongs to the RNase PH family. Homohexameric ring arranged as a trimer of dimers.

It catalyses the reaction tRNA(n+1) + phosphate = tRNA(n) + a ribonucleoside 5'-diphosphate. Functionally, phosphorolytic 3'-5' exoribonuclease that plays an important role in tRNA 3'-end maturation. Removes nucleotide residues following the 3'-CCA terminus of tRNAs; can also add nucleotides to the ends of RNA molecules by using nucleoside diphosphates as substrates, but this may not be physiologically important. Probably plays a role in initiation of 16S rRNA degradation (leading to ribosome degradation) during starvation. The chain is Ribonuclease PH from Thermodesulfovibrio yellowstonii (strain ATCC 51303 / DSM 11347 / YP87).